A 487-amino-acid polypeptide reads, in one-letter code: Chromosomal replication initiator protein DnaA (487 aa).

Positions 1–92 are domain I, interacts with DnaA modulators; sequence MTIKGGVVSQ…SELWTANDAT (92 aa). Residues 92 to 144 are domain II; it reads TGRRLDLKSRLEFESVGGAGYEAKAEPIEIVLPVSSDVPALAPTNGSKPSPVQ. The segment at 145–367 is domain III, AAA+ region; it reads GLQERFTFDT…GALNTLSARA (223 aa). Residues glycine 189, glycine 191, lysine 192, and threonine 193 each contribute to the ATP site. Residues 368–487 are domain IV, binds dsDNA; the sequence is GEGVSRLTLE…LETITRKLRG (120 aa).

This sequence belongs to the DnaA family. As to quaternary structure, oligomerizes as a right-handed, spiral filament on DNA at oriC.

The protein localises to the cytoplasm. Plays an essential role in the initiation and regulation of chromosomal replication. ATP-DnaA binds to the origin of replication (oriC) to initiate formation of the DNA replication initiation complex once per cell cycle. Binds the DnaA box (a 9 base pair repeat at the origin) and separates the double-stranded (ds)DNA. Forms a right-handed helical filament on oriC DNA; dsDNA binds to the exterior of the filament while single-stranded (ss)DNA is stabiized in the filament's interior. The ATP-DnaA-oriC complex binds and stabilizes one strand of the AT-rich DNA unwinding element (DUE), permitting loading of DNA polymerase. After initiation quickly degrades to an ADP-DnaA complex that is not apt for DNA replication. Binds acidic phospholipids. This Caulobacter sp. (strain K31) protein is Chromosomal replication initiator protein DnaA.